The primary structure comprises 292 residues: Light-independent protochlorophyllide reductase iron-sulfur ATP-binding protein (292 aa).

ATP-binding positions include 10 to 15 (GIGKST) and K39. S14 provides a ligand contact to Mg(2+). Residue C95 participates in [4Fe-4S] cluster binding. 182–183 (NR) provides a ligand contact to ATP.

It belongs to the NifH/BchL/ChlL family. Homodimer. Protochlorophyllide reductase is composed of three subunits; ChlL, ChlN and ChlB. Requires [4Fe-4S] cluster as cofactor.

Its subcellular location is the plastid. The protein resides in the chloroplast. The catalysed reaction is chlorophyllide a + oxidized 2[4Fe-4S]-[ferredoxin] + 2 ADP + 2 phosphate = protochlorophyllide a + reduced 2[4Fe-4S]-[ferredoxin] + 2 ATP + 2 H2O. It functions in the pathway porphyrin-containing compound metabolism; chlorophyll biosynthesis (light-independent). Its function is as follows. Component of the dark-operative protochlorophyllide reductase (DPOR) that uses Mg-ATP and reduced ferredoxin to reduce ring D of protochlorophyllide (Pchlide) to form chlorophyllide a (Chlide). This reaction is light-independent. The L component serves as a unique electron donor to the NB-component of the complex, and binds Mg-ATP. This is Light-independent protochlorophyllide reductase iron-sulfur ATP-binding protein from Huperzia lucidula (Shining clubmoss).